Here is a 671-residue protein sequence, read N- to C-terminus: Zinc finger protein 568 (671 aa).

Residues 1–31 form a disordered region; the sequence is MERLSQMAGRRAWCAEDSVPRQEEEDRTRPS. Residues 18 to 29 show a composition bias toward basic and acidic residues; it reads SVPRQEEEDRTR. KRAB domains are found at residues 34–105 and 124–195; these read VTFK…RRSP and LRFE…IWHP. Residues 214-366 are disordered; it reads EKMAKKHTCP…QGSERPHKCK (153 aa). 3 stretches are compositionally biased toward basic and acidic residues: residues 226 to 251, 296 to 312, and 329 to 341; these read EDSKTRGDREVTRELEGQQVHQEGHL, IEREQLHSKAKASEHAQ, and RPQESRKDSERKK. 11 C2H2-type zinc fingers span residues 363 to 385, 391 to 413, 419 to 441, 447 to 469, 475 to 497, 503 to 525, 531 to 553, 559 to 581, 587 to 609, 615 to 637, and 643 to 665; these read HKCKECGKAFHTPSQLSHHQKLH, YKCQECGKAFPSNAQLSLHHRVH, FECKECGKAFMRPSHLLRHQRIH, HKCKECGKAFRYDTQLSLHLLTH, FECKDCDKVYSCASQLALHQMSH, HKCKECGKGFISDSHLLRHQSVH, YKCKECGKGFRRGSELARHQRAH, YKCKECGKSFTCTTELFRHQKVH, HKCKECGKAFIRRSELTHHERSH, YECKECGKTFGRGSELSRHQKIH, and YKCQQCGKAFIRGSHLTQHQRIH.

Belongs to the krueppel C2H2-type zinc-finger protein family. As to quaternary structure, interacts with TRIM28. In terms of tissue distribution, little or no expression detected in most adult tissues (brain, liver, kidney, spleen, testis, ovary). In the hippocampus, detected in neural stem cells within the subventricular zone and subgranular zone.

It localises to the nucleus. Its function is as follows. Has transcriptional repression activity, partially through the recruitment of the corepressor TRIM28 but also has repression activity independently of this interaction. Essential during embryonic development, where it acts as direct repressor of IGF2-P0, placental-specific transcript of IGF2, in early development and regulates convergent extension movements required for axis elongation and tissue morphogenesis in all germ layers. Also important for normal morphogenesis of extraembryonic tissues including the yolk sac, extraembryonic mesoderm and placenta. May enhance proliferation or maintenance of neural stem cells. The sequence is that of Zinc finger protein 568 from Mus musculus (Mouse).